Here is a 255-residue protein sequence, read N- to C-terminus: 5-oxoprolinase subunit A 2 (255 aa).

This sequence belongs to the LamB/PxpA family. As to quaternary structure, forms a complex composed of PxpA, PxpB and PxpC.

It carries out the reaction 5-oxo-L-proline + ATP + 2 H2O = L-glutamate + ADP + phosphate + H(+). Its function is as follows. Catalyzes the cleavage of 5-oxoproline to form L-glutamate coupled to the hydrolysis of ATP to ADP and inorganic phosphate. This Agrobacterium fabrum (strain C58 / ATCC 33970) (Agrobacterium tumefaciens (strain C58)) protein is 5-oxoprolinase subunit A 2.